The following is a 465-amino-acid chain: Myosin-6 (465 aa).

The region spanning 1 to 35 is the Myosin motor domain; the sequence is ILERGDALLVVQWNIRAFTGVKKWPWMELYFEIEP. Residues 36 to 465 adopt a coiled-coil conformation; that stretch reads LLKSAEAEKE…YRRKLEEAQR (430 aa). Residues S285 and S334 each carry the phosphoserine modification. Y456 is modified (phosphotyrosine).

In terms of assembly, muscle myosin is a hexameric protein that consists of 2 heavy chain subunits (MHC), 2 alkali light chain subunits (MLC) and 2 regulatory light chain subunits (MLC-2).

It localises to the cytoplasm. Its subcellular location is the myofibril. Muscle contraction. The sequence is that of Myosin-6 (MYH6) from Oryctolagus cuniculus (Rabbit).